The following is a 229-amino-acid chain: MVAGLRDFTLRTEDGSGKPVLDESNGEELMHVQTSVAVALGNRPIESPGTLYITSRKLIWLSDVDMAKGYAVDFLSISLHAVSRDPEAYSSPCIYTQIEVEEDEDDESDSESTEVLDLSKIREMRLVPSDSTQLETLFDVFCECAELNPEPVQEEEEESGHNWVFSADQMDVRGGDDDAEWQISQSPTSVIGHSNGDEGLNQPMLELQINDQRFEDAEEMVHESETKDH.

The protein belongs to the pICln (TC 1.A.47) family. Homooligomer.

The protein localises to the cytoplasm. It localises to the nucleus. Its function is as follows. May participate in cellular volume control by activation of a swelling-induced chloride conductance pathway. This Arabidopsis thaliana (Mouse-ear cress) protein is Chloride conductance regulatory protein ICln.